A 345-amino-acid polypeptide reads, in one-letter code: Uroporphyrinogen decarboxylase (345 aa).

Substrate-binding positions include 26 to 30 (RQAGR), phenylalanine 45, aspartate 75, tyrosine 151, serine 206, and histidine 320.

Belongs to the uroporphyrinogen decarboxylase family. Homodimer.

It localises to the cytoplasm. The enzyme catalyses uroporphyrinogen III + 4 H(+) = coproporphyrinogen III + 4 CO2. It functions in the pathway porphyrin-containing compound metabolism; protoporphyrin-IX biosynthesis; coproporphyrinogen-III from 5-aminolevulinate: step 4/4. Catalyzes the decarboxylation of four acetate groups of uroporphyrinogen-III to yield coproporphyrinogen-III. The sequence is that of Uroporphyrinogen decarboxylase from Staphylococcus carnosus (strain TM300).